Here is a 525-residue protein sequence, read N- to C-terminus: Nucleolar complex protein 4 homolog B (525 aa).

Residues 1-10 show a composition bias toward basic residues; sequence MAARKAKHAF. A disordered region spans residues 1–21; the sequence is MAARKAKHAFRSQATQSDAER. Helical transmembrane passes span 307 to 327, 358 to 378, and 386 to 406; these read AAYD…FILI, FFHL…LVAA, and LALT…CNLI.

The protein belongs to the CBF/MAK21 family.

It is found in the nucleus membrane. The protein resides in the nucleus. It localises to the nucleolus. In Xenopus laevis (African clawed frog), this protein is Nucleolar complex protein 4 homolog B (noc4l-b).